The primary structure comprises 591 residues: Aspartate--tRNA ligase (591 aa).

Position 173 (E173) interacts with L-aspartate. The tract at residues 197–200 (QLFK) is aspartate. An L-aspartate-binding site is contributed by R219. Residues 219-221 (RDE) and Q228 each bind ATP. H448 lines the L-aspartate pocket. E482 is an ATP binding site. R489 lines the L-aspartate pocket. Position 534–537 (534–537 (GLDR)) interacts with ATP.

Belongs to the class-II aminoacyl-tRNA synthetase family. Type 1 subfamily. Homodimer.

Its subcellular location is the cytoplasm. It catalyses the reaction tRNA(Asp) + L-aspartate + ATP = L-aspartyl-tRNA(Asp) + AMP + diphosphate. Its function is as follows. Catalyzes the attachment of L-aspartate to tRNA(Asp) in a two-step reaction: L-aspartate is first activated by ATP to form Asp-AMP and then transferred to the acceptor end of tRNA(Asp). This chain is Aspartate--tRNA ligase, found in Shewanella sp. (strain ANA-3).